A 260-amino-acid chain; its full sequence is Voltage-dependent calcium channel gamma-6 subunit (260 aa).

4 consecutive transmembrane segments (helical) span residues 43–63 (LLVA…EFWV), 143–163 (VIAV…IMVL), 169–189 (SLLR…FVSL), and 221–241 (LGCG…FLLL).

Belongs to the PMP-22/EMP/MP20 family. CACNG subfamily. Interacts with CACNA1C. Identified in a complex with the L-type calcium channel subunits CACNA1C, CACNA2D1 and either CACNB1 or CACNB2. Detected in brain and heart (at protein level).

It localises to the cell membrane. Its function is as follows. Regulates the activity of L-type calcium channels that contain CACNA1C as pore-forming subunit. In Mus musculus (Mouse), this protein is Voltage-dependent calcium channel gamma-6 subunit (Cacng6).